A 116-amino-acid chain; its full sequence is T-cell leukemia/lymphoma protein 1A (116 aa).

It belongs to the TCL1 family. In terms of assembly, homodimer. Interacts with AKT1, AKT2 and AKT3 (via PH domain). Interacts with PNPT1; the interaction has no effect on PNPT1 exonuclease activity.

Its subcellular location is the cytoplasm. It is found in the nucleus. The protein localises to the microsome. It localises to the endoplasmic reticulum. Enhances the phosphorylation and activation of AKT1 and AKT2. Enhances cell proliferation, stabilizes mitochondrial membrane potential and promotes cell survival. The chain is T-cell leukemia/lymphoma protein 1A (Tcl1a) from Mus musculus (Mouse).